The following is a 499-amino-acid chain: MVDRGPLLTSAIIFYLAIGAAIFEVLEEPHWKEAKKNYYTQKLHLLKEFPCLGQEGLDKILEVVSDAAGQGVAITGNQTFNNWNWPNAMIFAATVITTIGYGNVAPKTPAGRLFCVFYGLFGVPLCLTWISALGKFFGGRAKRLGQFLTKRGVSLRKAQITCTVIFIVWGVLVHLVIPPFVFMVTEGWNYIEGLYYSFITISTIGFGDFVAGVNPSANYHALYRYFVELWIYLGLAWLSLFVNWKVSMFVEVHKAIKKRRRRRKESFESSPHSRKALQVKGSTASKDVNIFSFLSKKEETYNDLIKQIGKKAMKTSGGGETGPGPGLGPQGGGLPALPPSLVPLVVYSKNRVPTLEEVSQTLRSKGHVSRSPDEEAVARAPEDSSPAPEVFMNQLDRISEECEPWDAQDYHPLIFQDASITFVNTEAGLSDEETSKSSLEDNLAGEESPQQGAEAKAPLNMGEFPSSSESTFTSTESELSVPYEQLMNEYNKANSPKGT.

Residues 1–7 are Cytoplasmic-facing; it reads MVDRGPL. A helical transmembrane segment spans residues 8-26; sequence LTSAIIFYLAIGAAIFEVL. N-linked (GlcNAc...) asparagine glycosylation occurs at Asn-77. The segment at residues 85 to 112 is an intramembrane region (pore-forming); the sequence is WPNAMIFAATVITTIGYGNVAPKTPAGR. Positions 98, 99, 100, and 101 each coordinate K(+). Positions 98–103 are selectivity filter 1; it reads TIGYGN. The chain crosses the membrane as a helical span at residues 113 to 133; sequence LFCVFYGLFGVPLCLTWISAL. The Cytoplasmic portion of the chain corresponds to 134–157; the sequence is GKFFGGRAKRLGQFLTKRGVSLRK. Residues 158-180 form a helical membrane-spanning segment; the sequence is AQITCTVIFIVWGVLVHLVIPPF. The segment at residues 190-215 is an intramembrane region (pore-forming); it reads YIEGLYYSFITISTIGFGDFVAGVNP. 4 residues coordinate K(+): Thr-203, Ile-204, Gly-205, and Phe-206. Residues 203 to 208 form a selectivity filter 2 region; the sequence is TIGFGD. The chain crosses the membrane as a helical span at residues 230-250; it reads WIYLGLAWLSLFVNWKVSMFV. The Cytoplasmic segment spans residues 251–325; it reads EVHKAIKKRR…SGGGETGPGP (75 aa). 3 disordered regions span residues 312-335, 360-388, and 428-499; these read AMKT…GGLP, QTLR…SPAP, and GLSD…PKGT. The span at 316 to 334 shows a compositional bias: gly residues; sequence SGGGETGPGPGLGPQGGGL. The segment covering 370–382 has biased composition (basic and acidic residues); the sequence is RSPDEEAVARAPE. Ser-371 carries the phosphoserine modification. The segment covering 466–480 has biased composition (low complexity); it reads SSSESTFTSTESELS.

The protein belongs to the two pore domain potassium channel (TC 1.A.1.8) family. As to quaternary structure, homodimer; disulfide-linked. Heterodimer with KCNK16 and KCNK17. Abundant expression in kidney, also detected in liver, placenta and small intestine. In the kidney, expression is restricted to the distal tubules and collecting ducts. Not expressed in proximal tubules or glomeruli. Expressed in pancreas, in both endocrine (alpha, beta, gamma, delta, and epsilon) and exocrine (acinar and ductal) cells.

It localises to the membrane. It catalyses the reaction K(+)(in) = K(+)(out). Its activity is regulated as follows. The channel conductance is stimulated by extracellular alkaline pH. Inhibited by quinine, quinidine and external acidification. In terms of biological role, k(+) channel that conducts voltage-dependent outward rectifying currents upon membrane depolarization. Voltage sensing is coupled to K(+) electrochemical gradient in an 'ion flux gating' mode where outward but not inward ion flow opens the gate. Homo- and heterodimerizes to form functional channels with distinct regulatory and gating properties. The sequence is that of Potassium channel subfamily K member 5 from Homo sapiens (Human).